Here is a 348-residue protein sequence, read N- to C-terminus: Selenide, water dikinase (348 aa).

Cys17 is an active-site residue. Residues Lys20 and 47–49 (THD) each bind ATP. Residue Asp50 coordinates Mg(2+). ATP-binding positions include Asp67, Asp90, and 138–140 (GHT). Mg(2+) is bound at residue Asp90. A Mg(2+)-binding site is contributed by Asp226.

It belongs to the selenophosphate synthase 1 family. Class I subfamily. As to quaternary structure, homodimer. It depends on Mg(2+) as a cofactor.

The enzyme catalyses hydrogenselenide + ATP + H2O = selenophosphate + AMP + phosphate + 2 H(+). In terms of biological role, synthesizes selenophosphate from selenide and ATP. This chain is Selenide, water dikinase, found in Porphyromonas gingivalis (strain ATCC BAA-308 / W83).